Here is an 87-residue protein sequence, read N- to C-terminus: Small ribosomal subunit protein uS15 (87 aa).

This sequence belongs to the universal ribosomal protein uS15 family. In terms of assembly, part of the 30S ribosomal subunit. Forms a bridge to the 50S subunit in the 70S ribosome, contacting the 23S rRNA.

In terms of biological role, one of the primary rRNA binding proteins, it binds directly to 16S rRNA where it helps nucleate assembly of the platform of the 30S subunit by binding and bridging several RNA helices of the 16S rRNA. Its function is as follows. Forms an intersubunit bridge (bridge B4) with the 23S rRNA of the 50S subunit in the ribosome. The chain is Small ribosomal subunit protein uS15 from Clostridium acetobutylicum (strain ATCC 824 / DSM 792 / JCM 1419 / IAM 19013 / LMG 5710 / NBRC 13948 / NRRL B-527 / VKM B-1787 / 2291 / W).